We begin with the raw amino-acid sequence, 354 residues long: Membrane progestin receptor alpha-B (354 aa).

Residues M1–S76 are Cytoplasmic-facing. Residues V77–S97 form a helical membrane-spanning segment. At E98–P110 the chain is on the extracellular side. Residues M111–L131 traverse the membrane as a helical segment. At S132–T141 the chain is on the cytoplasmic side. A helical membrane pass occupies residues F142–F162. Over Y163–R175 the chain is Extracellular. Residues T176–G196 traverse the membrane as a helical segment. Residues K197–Q244 lie on the Cytoplasmic side of the membrane. A helical transmembrane segment spans residues A245–Y265. The Extracellular segment spans residues P266 to D277. The chain crosses the membrane as a helical span at residues F278–I298. At E299 to D318 the chain is on the cytoplasmic side. The chain crosses the membrane as a helical span at residues L319–F339. Over Y340 to E354 the chain is Extracellular.

The protein belongs to the ADIPOR family.

It localises to the cell membrane. Steroid membrane receptor. Signals upon progestin binding, resulting in rapid activation of MAPK and down-regulation of adenylyl cyclase activity. Interacts with steroids with varying degrees of affinity, showing specificity for activation by the maturation-inducing steroid (MIS) 4-pregnen-17,20beta-diol-3-one (17,20beta-DHP). Capable of mediating progestin-induced oocyte maturation. The chain is Membrane progestin receptor alpha-B (paqr7b) from Danio rerio (Zebrafish).